The primary structure comprises 339 residues: MAKRHLTRRQSWRIEKIQEERAARAARRESRAVDELEGGDLGPEQTGQVIAHFGVQVEVESADGQVSRCHLRANLPALVTGDQVVWRAGNQGIGVIVAQLPRRSELCRPDMRGLLKPVAANVDRIVIVFAPRPEPHANLIDRYLIAAEHAGIQPLLLLNKADLVDESNAEGIDALLNVYRTLGYPLIEVSAFNGLAMDELRGALDGHVSVFVGQSGVGKSSLVNALLPGVDTRVGDLSTVTGKGTHTTTTARLFHFPGGGDLIDSPGIREFGLGHVSRDDVEAGFIEFRDLLGHCRFRDCKHDREPGCALLQALEDGRIMPQRMASYRHILASMPETDY.

The CP-type G domain occupies 111-271; sequence MRGLLKPVAA…LIDSPGIREF (161 aa). GTP is bound by residues 159-162 and 213-221; these read NKAD and GQSGVGKSS. The Zn(2+) site is built by cysteine 295, cysteine 300, histidine 302, and cysteine 308.

Belongs to the TRAFAC class YlqF/YawG GTPase family. RsgA subfamily. Monomer. Associates with 30S ribosomal subunit, binds 16S rRNA. Zn(2+) is required as a cofactor.

The protein localises to the cytoplasm. Its function is as follows. One of several proteins that assist in the late maturation steps of the functional core of the 30S ribosomal subunit. Helps release RbfA from mature subunits. May play a role in the assembly of ribosomal proteins into the subunit. Circularly permuted GTPase that catalyzes slow GTP hydrolysis, GTPase activity is stimulated by the 30S ribosomal subunit. The chain is Small ribosomal subunit biogenesis GTPase RsgA from Pseudomonas aeruginosa (strain LESB58).